The following is a 227-amino-acid chain: tRNA (guanine-N(1)-)-methyltransferase (227 aa).

S-adenosyl-L-methionine-binding positions include G110 and 129-134 (IGDYVL).

The protein belongs to the RNA methyltransferase TrmD family. Homodimer.

It is found in the cytoplasm. The enzyme catalyses guanosine(37) in tRNA + S-adenosyl-L-methionine = N(1)-methylguanosine(37) in tRNA + S-adenosyl-L-homocysteine + H(+). Specifically methylates guanosine-37 in various tRNAs. This Mycoplasmopsis synoviae (strain 53) (Mycoplasma synoviae) protein is tRNA (guanine-N(1)-)-methyltransferase.